The following is a 367-amino-acid chain: Fructose-1,6-bisphosphatase class 1 3 (367 aa).

Belongs to the FBPase class 1 family. In terms of assembly, homotetramer.

Its subcellular location is the cytoplasm. The catalysed reaction is beta-D-fructose 1,6-bisphosphate + H2O = beta-D-fructose 6-phosphate + phosphate. It participates in carbohydrate biosynthesis; gluconeogenesis. This chain is Fructose-1,6-bisphosphatase class 1 3, found in Paraburkholderia phymatum (strain DSM 17167 / CIP 108236 / LMG 21445 / STM815) (Burkholderia phymatum).